The chain runs to 921 residues: MKNFWKISVFFCVCSCLGPWVSATLKRRARFPANSISNGGSELCPKIRIGQDDLPGFDLISQFQIEKAASRRTIQRVVGSTALQVAYKLGSNVDFRIPTRHLYPSGLPEEYSFLTTFRMTGSTLEKHWNIWQIQDSAGREQVGVKINGQTKSVAFSYKGLDGSLQTAAFLNLPSLFDSRWHKLMIGVERTSATLFIDCIRIESLPIKPRGQIDADGFAVLGKLVDNPQVSVPFELQWMLIHCDPLRPRRETCHELPIRITTSQTTDERGPPGEQGPPGPPGPPGVPGIDGIDGDRGPKGPPGPPGPPGDPGKPGAPGKPGTPGADGLTGPDGSPGSVGPRGQKGEPGVPGSRGFPGRGIPGPPGPPGTTGLPGELGRVGPIGDPGKRGPPGPPGPPGPSGTIGFHDGDPLCPNSCPPGRSGYPGLPGMRGHKGAKGEIGEPGRQGHKGEEGDQGELGEVGAQGPPGPQGLRGITGIVGDKGEKGARGFDGEPGPQGIPGAAGDQGQRGPPGETGPKGDRGIQGSRGIPGSPGPKGDTGLPGVDGRDGIPGMPGTKGEAGKPGPPGDVGLQGLPGVPGIPGAKGVAGEKGNTGAPGKPGQLGSSGKPGQQGPPGEVGPRGPRGLPGSRGPVGPEGSPGIPGKLGSVGSPGLPGLPGPPGLPGMKGDRGVFGEPGPKGEQGASGEEGEAGARGDLGDMGQPGPKGSVGNPGEPGLRGPEGIRGLPGVEGPRGPPGPRGMQGEQGATGLPGIQGPPGRAPTDQHIKQVCMRVVQEHFVEMAASLKRPDTGASGLPGRPGPPGPPGPPGENGFPGQMGIRGLPGIKGPPGALGLRGPKGDLGEKGERGPPGRGPKGLPGAIGLPGDPGPASYGKNGRDGEQGPPGVAGIPGVPGPPGPPGPPGFCEPASCTLQSGQRAFSKGPDK.

Residues 1 to 23 (MKNFWKISVFFCVCSCLGPWVSA) form the signal peptide. The interval 24–268 (TLKRRARFPA…ITTSQTTDER (245 aa)) is nonhelical region (NC4). Disulfide bonds link cysteine 44–cysteine 242 and cysteine 198–cysteine 252. Residues 50-244 (GQDDLPGFDL…LQWMLIHCDP (195 aa)) enclose the Laminin G-like domain. Residues aspartate 213, aspartate 215, and histidine 253 each contribute to the Zn(2+) site. Disordered regions lie at residues 253–759 (HELP…APTD) and 783–921 (RPDT…GPDK). 8 Collagen-like domains span residues 269–325 (GPPG…PGAD), 326–356 (GLTG…GFPG), 358–403 (GIPG…GTIG), 416–472 (PPGR…GLRG), 473–512 (ITGI…PPGE), 604–656 (GKPG…LPGP), 657–711 (PGLP…PGEP), and 712–755 (GLRG…PPGR). The segment at 269–405 (GPPGEQGPPG…PGPSGTIGFH (137 aa)) is triple-helical region (COL3). Composition is skewed to pro residues over residues 273–285 (EQGP…PPGV) and 298–310 (KGPP…PGDP). Positions 368 to 383 (TTGLPGELGRVGPIGD) are enriched in low complexity. Residues 387–398 (RGPPGPPGPPGP) are compositionally biased toward pro residues. The segment at 406-417 (DGDPLCPNSCPP) is nonhelical region (NC3). Positions 418–756 (GRSGYPGLPG…PGIQGPPGRA (339 aa)) are triple-helical region (COL2). The segment covering 479–489 (DKGEKGARGFD) has biased composition (basic and acidic residues). Composition is skewed to low complexity over residues 594–632 (PGKP…PVGP) and 639–650 (PGKLGSVGSPGL). The tract at residues 757–786 (PTDQHIKQVCMRVVQEHFVEMAASLKRPDT) is nonhelical region (NC2). The segment at 787-901 (GASGLPGRPG…PGPPGPPGFC (115 aa)) is triple-helical region (COL1). In terms of domain architecture, Collagen-like 9 spans 790 to 847 (GLPGRPGPPGPPGPPGENGFPGQMGIRGLPGIKGPPGALGLRGPKGDLGEKGERGPPG). Over residues 794–804 (RPGPPGPPGPP) the composition is skewed to pro residues. Over residues 833-845 (PKGDLGEKGERGP) the composition is skewed to basic and acidic residues. The span at 888–900 (VPGPPGPPGPPGF) shows a compositional bias: pro residues. Residues 902 to 921 (EPASCTLQSGQRAFSKGPDK) form a nonhelical region (NC1) region.

The protein belongs to the fibril-associated collagens with interrupted helices (FACIT) family. In terms of assembly, heterotrimer of an alpha 1(IX), an alpha 2(IX) and an alpha 3(IX) chain. Covalently linked to the telopeptides of type II collagen by lysine-derived cross-links. In terms of processing, prolines at the third position of the tripeptide repeating unit (G-X-Y) are hydroxylated in some or all of the chains.

It localises to the secreted. The protein localises to the extracellular space. It is found in the extracellular matrix. Its function is as follows. Structural component of hyaline cartilage and vitreous of the eye. The sequence is that of Collagen alpha-1(IX) chain (Col9a1) from Mus musculus (Mouse).